The primary structure comprises 294 residues: Sulfotransferase 1E1 (294 aa).

Position 47-52 (K47–W52) interacts with 3'-phosphoadenylyl sulfate. Substrate is bound at residue K105–H107. H107 serves as the catalytic Proton acceptor. Residues R129, S137, Y192, T226–M231, and R256–G258 contribute to the 3'-phosphoadenylyl sulfate site.

Belongs to the sulfotransferase 1 family. In terms of assembly, homodimer. In terms of tissue distribution, liver, intestine and at lower level in the kidney.

The protein resides in the cytoplasm. It localises to the cytosol. The catalysed reaction is estrone + 3'-phosphoadenylyl sulfate = estrone 3-sulfate + adenosine 3',5'-bisphosphate + H(+). The enzyme catalyses (24S)-hydroxycholesterol + 3'-phosphoadenylyl sulfate = (24S)-hydroxycholesterol 3-sulfate + adenosine 3',5'-bisphosphate + H(+). It catalyses the reaction 17beta-estradiol + 3'-phosphoadenylyl sulfate = 17beta-estradiol 3-sulfate + adenosine 3',5'-bisphosphate + H(+). It carries out the reaction 3beta-hydroxyandrost-5-en-17-one + 3'-phosphoadenylyl sulfate = dehydroepiandrosterone 3-sulfate + adenosine 3',5'-bisphosphate + H(+). The catalysed reaction is 4-ethylphenol + 3'-phosphoadenylyl sulfate = 4-ethylphenyl sulfate + adenosine 3',5'-bisphosphate + H(+). Its activity is regulated as follows. Inhibited by estradiol. Sulfotransferase that utilizes 3'-phospho-5'-adenylyl sulfate (PAPS) as sulfonate donor to catalyze the sulfate conjugation of estradiol and estrone. Is a key enzyme in estrogen homeostasis, the sulfation of estrogens leads to their inactivation. Also sulfates dehydroepiandrosterone (DHEA), pregnenolone, (24S)-hydroxycholesterol and xenobiotic compounds like ethinylestradiol, equalenin, diethyl stilbesterol and 1-naphthol at significantly lower efficiency. Does not sulfonate cortisol, testosterone and dopamine. May play a role in gut microbiota-host metabolic interaction. O-sulfonates 4-ethylphenol (4-EP), a dietary tyrosine-derived metabolite produced by gut bacteria. The product 4-EPS crosses the blood-brain barrier and may negatively regulate oligodendrocyte maturation and myelination, affecting the functional connectivity of different brain regions associated with the limbic system. The protein is Sulfotransferase 1E1 (SULT1E1) of Homo sapiens (Human).